The following is a 334-amino-acid chain: Mevalonate kinase (334 aa).

Residue 110–120 (PVGAGLGSSAA) coordinates ATP. Aspartate 161 functions as the Proton acceptor in the catalytic mechanism.

This sequence belongs to the GHMP kinase family. Mevalonate kinase subfamily. In terms of assembly, homodimer. Mg(2+) is required as a cofactor.

The protein localises to the cytoplasm. The enzyme catalyses (R)-mevalonate + ATP = (R)-5-phosphomevalonate + ADP + H(+). It functions in the pathway isoprenoid biosynthesis; isopentenyl diphosphate biosynthesis via mevalonate pathway; isopentenyl diphosphate from (R)-mevalonate: step 1/3. Catalyzes the phosphorylation of (R)-mevalonate (MVA) to (R)-mevalonate 5-phosphate (MVAP). Functions in the mevalonate (MVA) pathway leading to isopentenyl diphosphate (IPP), a key precursor for the biosynthesis of isoprenoid compounds such as archaeal membrane lipids. The chain is Mevalonate kinase from Thermococcus gammatolerans (strain DSM 15229 / JCM 11827 / EJ3).